The sequence spans 1117 residues: Mitochondrial protein cyt-4 (1117 aa).

The RNB domain maps to 561-916; that stretch reads RQDFYTSTVY…LVHWQIQAAL (356 aa). The disordered stretch occupies residues 705–730; that stretch reads VVLEVGTPPSAEDEAPTRKMTKPDEL. Residues 719–730 show a composition bias toward basic and acidic residues; sequence APTRKMTKPDEL.

The protein belongs to the RNR ribonuclease family. As to quaternary structure, homodimer.

The protein localises to the mitochondrion. Functionally, required for RNA 5'- and 3'-end processing and splicing. May act on the RNA processing enzymes directly, or it may act on other regulatory molecules, which influence the activity or synthesis of these enzymes. The chain is Mitochondrial protein cyt-4 (cyt-4) from Neurospora crassa (strain ATCC 24698 / 74-OR23-1A / CBS 708.71 / DSM 1257 / FGSC 987).